A 263-amino-acid polypeptide reads, in one-letter code: Post-GPI attachment to proteins factor 2 (263 aa).

The next 6 helical transmembrane spans lie at 16–36 (FVIC…ILSL), 69–89 (YIWR…AIAF), 109–129 (FLCN…LALT), 143–163 (CFGG…WLFN), 180–200 (YKIL…YLYW), and 208–228 (PGIY…NIFF).

It belongs to the PGAP2 family.

The protein resides in the golgi apparatus membrane. The protein localises to the endoplasmic reticulum membrane. Involved in the lipid remodeling steps of GPI-anchor maturation. Required for stable expression of GPI-anchored proteins at the cell surface. The protein is Post-GPI attachment to proteins factor 2 of Caenorhabditis elegans.